Consider the following 142-residue polypeptide: Large ribosomal subunit protein uL11 (142 aa).

Belongs to the universal ribosomal protein uL11 family. In terms of assembly, part of the ribosomal stalk of the 50S ribosomal subunit. Interacts with L10 and the large rRNA to form the base of the stalk. L10 forms an elongated spine to which L12 dimers bind in a sequential fashion forming a multimeric L10(L12)X complex. In terms of processing, one or more lysine residues are methylated.

Functionally, forms part of the ribosomal stalk which helps the ribosome interact with GTP-bound translation factors. This chain is Large ribosomal subunit protein uL11, found in Erwinia tasmaniensis (strain DSM 17950 / CFBP 7177 / CIP 109463 / NCPPB 4357 / Et1/99).